The chain runs to 132 residues: Sec-independent protein translocase protein TatB (132 aa).

The chain crosses the membrane as a helical span at residues 1–21 (MFDIGFWELVLISVVGLVVLG). Residues 70–132 (GMEDLSPELK…KVSAADKKAE (63 aa)) form a disordered region. Composition is skewed to basic and acidic residues over residues 96 to 108 (YADK…ETAK) and 115 to 132 (SAEK…KKAE).

The protein belongs to the TatB family. In terms of assembly, the Tat system comprises two distinct complexes: a TatABC complex, containing multiple copies of TatA, TatB and TatC subunits, and a separate TatA complex, containing only TatA subunits. Substrates initially bind to the TatABC complex, which probably triggers association of the separate TatA complex to form the active translocon.

Its subcellular location is the cell inner membrane. Its function is as follows. Part of the twin-arginine translocation (Tat) system that transports large folded proteins containing a characteristic twin-arginine motif in their signal peptide across membranes. Together with TatC, TatB is part of a receptor directly interacting with Tat signal peptides. TatB may form an oligomeric binding site that transiently accommodates folded Tat precursor proteins before their translocation. This Vibrio parahaemolyticus serotype O3:K6 (strain RIMD 2210633) protein is Sec-independent protein translocase protein TatB.